Reading from the N-terminus, the 868-residue chain is Alanine--tRNA ligase (868 aa).

The Zn(2+) site is built by H556, H560, C666, and H670.

The protein belongs to the class-II aminoacyl-tRNA synthetase family. Zn(2+) serves as cofactor.

It is found in the cytoplasm. It carries out the reaction tRNA(Ala) + L-alanine + ATP = L-alanyl-tRNA(Ala) + AMP + diphosphate. Functionally, catalyzes the attachment of alanine to tRNA(Ala) in a two-step reaction: alanine is first activated by ATP to form Ala-AMP and then transferred to the acceptor end of tRNA(Ala). Also edits incorrectly charged Ser-tRNA(Ala) and Gly-tRNA(Ala) via its editing domain. The polypeptide is Alanine--tRNA ligase (Elusimicrobium minutum (strain Pei191)).